Reading from the N-terminus, the 291-residue chain is Protease HtpX homolog (291 aa).

Helical transmembrane passes span 4 to 24 and 39 to 59; these read ILLF…VASL and GSLL…SLLI. Histidine 144 serves as a coordination point for Zn(2+). The active site involves glutamate 145. Residue histidine 148 participates in Zn(2+) binding. The next 2 helical transmembrane spans lie at 159-179 and 199-219; these read LIQG…AFAI and ITTV…VAWF. Residue glutamate 224 participates in Zn(2+) binding.

This sequence belongs to the peptidase M48B family. It depends on Zn(2+) as a cofactor.

The protein resides in the cell inner membrane. In Albidiferax ferrireducens (strain ATCC BAA-621 / DSM 15236 / T118) (Rhodoferax ferrireducens), this protein is Protease HtpX homolog.